The primary structure comprises 200 residues: BREX protein BrxB (200 aa).

Belongs to the BrxB family.

Its function is as follows. BREX systems (bacteriophage exclusion) provide immunity against bacteriophage. Part of a type 1 BREX system which protects against dsDNA phage. This system allows phage adsorption but prevents phage DNA replication, without degradation of the phage DNA. Methylation of bacterial DNA by PglX guides self/non-self discrimination. When the brxA-brxB-brxC-pglX-pglZ-brxL genes are transformed into a susceptible E.coli strain (BW25113) they confer very high resistance to infection by bacteriophage VR7 and VpaE1, about 100-fold protection against lambda, T5 and T7 and no protection against RNA phage Qbeta, ssDNA phage M13 or dSDNA phage T4 and VR5. Glycosylated phage DNA is not susceptible to BREX. The BREX system does not confer resistance to lysogenic lambda phage, i.e. prophage that are integrated into the chromosomal DNA and then induced to form phage. The chain is BREX protein BrxB from Escherichia coli O9:H4 (strain HS).